Here is a 316-residue protein sequence, read N- to C-terminus: Ribose-phosphate pyrophosphokinase (316 aa).

ATP-binding positions include Asp39–Glu41 and Arg98–Gln99. Mg(2+) is bound by residues His133 and Asp172. Residue Lys195 is part of the active site. Residues Arg197, Asp221, and Asp225 to Thr229 contribute to the D-ribose 5-phosphate site.

This sequence belongs to the ribose-phosphate pyrophosphokinase family. Class I subfamily. As to quaternary structure, homohexamer. It depends on Mg(2+) as a cofactor.

It localises to the cytoplasm. The catalysed reaction is D-ribose 5-phosphate + ATP = 5-phospho-alpha-D-ribose 1-diphosphate + AMP + H(+). The protein operates within metabolic intermediate biosynthesis; 5-phospho-alpha-D-ribose 1-diphosphate biosynthesis; 5-phospho-alpha-D-ribose 1-diphosphate from D-ribose 5-phosphate (route I): step 1/1. In terms of biological role, involved in the biosynthesis of the central metabolite phospho-alpha-D-ribosyl-1-pyrophosphate (PRPP) via the transfer of pyrophosphoryl group from ATP to 1-hydroxyl of ribose-5-phosphate (Rib-5-P). This is Ribose-phosphate pyrophosphokinase from Ralstonia nicotianae (strain ATCC BAA-1114 / GMI1000) (Ralstonia solanacearum).